The primary structure comprises 203 residues: Imidazoleglycerol-phosphate dehydratase (203 aa).

The protein belongs to the imidazoleglycerol-phosphate dehydratase family.

The protein localises to the cytoplasm. It carries out the reaction D-erythro-1-(imidazol-4-yl)glycerol 3-phosphate = 3-(imidazol-4-yl)-2-oxopropyl phosphate + H2O. The protein operates within amino-acid biosynthesis; L-histidine biosynthesis; L-histidine from 5-phospho-alpha-D-ribose 1-diphosphate: step 6/9. This Deinococcus geothermalis (strain DSM 11300 / CIP 105573 / AG-3a) protein is Imidazoleglycerol-phosphate dehydratase.